The chain runs to 310 residues: Choline trimethylamine-lyase activating enzyme (310 aa).

The region spanning 17–304 (YDGPGVRTLV…EACIRKYDFP (288 aa)) is the Radical SAM core domain. [4Fe-4S] cluster contacts are provided by cysteine 31, cysteine 35, cysteine 38, cysteine 57, cysteine 60, cysteine 63, and cysteine 99. Position 37 to 39 (37 to 39 (WCS)) interacts with S-adenosyl-L-methionine. 4Fe-4S ferredoxin-type domains lie at 48-77 (YQVL…ISAS) and 79-109 (LRHG…VVGE). S-adenosyl-L-methionine contacts are provided by residues glycine 139, 188-190 (DVK), and histidine 264.

This sequence belongs to the organic radical-activating enzymes family. In terms of assembly, monomer. [4Fe-4S] cluster serves as cofactor.

It catalyses the reaction glycyl-[protein] + reduced [flavodoxin] + S-adenosyl-L-methionine = glycin-2-yl radical-[protein] + semiquinone [flavodoxin] + 5'-deoxyadenosine + L-methionine + H(+). Its pathway is amine and polyamine metabolism; choline degradation. Its function is as follows. Catalyzes activation of the choline trimethylamine-lyase CutC under anaerobic conditions by generation of an organic free radical on a glycine residue, via a homolytic cleavage of S-adenosyl-L-methionine (SAM). Is involved in the anaerobic choline utilization pathway that allows D.alaskensis to grow on choline as a source of carbon and energy. The chain is Choline trimethylamine-lyase activating enzyme from Oleidesulfovibrio alaskensis (strain ATCC BAA-1058 / DSM 17464 / G20) (Desulfovibrio alaskensis).